The chain runs to 24 residues: Lycosin-I (24 aa).

The protein belongs to the cationic peptide 04 (cupiennin) family. 05 subfamily. In terms of assembly, monomer in solution. Small size oligomers on the lipid membranes.

The protein resides in the secreted. Its subcellular location is the target cell membrane. Antimicrobial peptide that inhibits many reference strains of bacteria and fungi. Is potent against Candida species and multidrug-resistant Acinetobacter baumannii (MDRAB). Is probably localized in the cytoplasm after being transported through the cell wall and membrane. Is able to interact with cell membranes and enter into cell plasma to activate the mitochondrial death pathway to sensitize cancer cells for apoptosis, as well as up-regulates p27 to inhibit cell proliferation. It shows very low effect on normal cells, such as erythrocytes, Hek293t cells. It also potently inhibits tumor cell growth in vitro, and suppresses various tumor growth in vivo when tested in human cancer xenograft models. It interacts with the cell membrane and is then internalized into the cytoplasm of cancer cells to initiate the programmable cell death. In addition, this peptide has the therapeutic effects of anti-hypertension by endothelium-dependent vasodilatation via the NO/sGC/cGMP signaling pathway. In vivo, this peptide also shows a significant ability to inhibit T.gondii invasion and proliferation, making it a potential alternative agent for the treatment of toxoplasmosis. In Lycosa singoriensis (Wolf spider), this protein is Lycosin-I.